Consider the following 400-residue polypeptide: Phosphoglycerate kinase (400 aa).

Substrate is bound by residues 21-23, R36, 59-62, R118, and R151; these read DFN and HLGR. Residues K201, G293, E324, and 353–356 each bind ATP; that span reads GGDS.

It belongs to the phosphoglycerate kinase family. As to quaternary structure, monomer.

It localises to the cytoplasm. The catalysed reaction is (2R)-3-phosphoglycerate + ATP = (2R)-3-phospho-glyceroyl phosphate + ADP. It participates in carbohydrate degradation; glycolysis; pyruvate from D-glyceraldehyde 3-phosphate: step 2/5. This is Phosphoglycerate kinase from Fervidobacterium nodosum (strain ATCC 35602 / DSM 5306 / Rt17-B1).